The chain runs to 186 residues: ADP-ribosylation factor-like protein 8A (186 aa).

Positions 1–19 (MLALFNKLLDWFRALFWKE) form an intramembrane region, note=Mediates targeting to membranes. Residues 29-35 (QYSGKTT), 71-75 (DIGGQ), and 130-133 (NKRD) contribute to the GTP site.

Belongs to the small GTPase superfamily. Arf family.

The protein resides in the late endosome membrane. It localises to the lysosome membrane. The protein localises to the cytoplasm. It is found in the cytoskeleton. Its subcellular location is the spindle. The protein resides in the cell projection. It localises to the axon. The protein localises to the synapse. Functionally, plays a role in lysosome motility. In neurons, mediates the anterograde axonal long-range transport of presynaptic lysosome-related vesicles required for presynaptic biogenesis and synaptic function. May play a role in chromosome segregation. In Gallus gallus (Chicken), this protein is ADP-ribosylation factor-like protein 8A (ARL8A).